Consider the following 259-residue polypeptide: Type III pantothenate kinase (259 aa).

6–13 (DVGNTNIV) contacts ATP. Substrate contacts are provided by residues Y100 and 107 to 110 (GADR). D109 acts as the Proton acceptor in catalysis. Position 129 (D129) interacts with K(+). Residue T132 coordinates ATP. T184 is a substrate binding site.

This sequence belongs to the type III pantothenate kinase family. In terms of assembly, homodimer. The cofactor is NH4(+). K(+) serves as cofactor.

It localises to the cytoplasm. It catalyses the reaction (R)-pantothenate + ATP = (R)-4'-phosphopantothenate + ADP + H(+). It participates in cofactor biosynthesis; coenzyme A biosynthesis; CoA from (R)-pantothenate: step 1/5. In terms of biological role, catalyzes the phosphorylation of pantothenate (Pan), the first step in CoA biosynthesis. The protein is Type III pantothenate kinase of Clostridium perfringens (strain ATCC 13124 / DSM 756 / JCM 1290 / NCIMB 6125 / NCTC 8237 / Type A).